The sequence spans 31 residues: Maltose/maltodextrin import ATP-binding protein MalK (31 aa).

This sequence belongs to the ABC transporter superfamily. Maltooligosaccharide importer (TC 3.A.1.1.1) family. In terms of assembly, the complex is composed of two ATP-binding proteins (MalK), two transmembrane proteins (MalG and MalK) and a solute-binding protein (MalE).

The protein localises to the cell inner membrane. The enzyme catalyses D-maltose(out) + ATP + H2O = D-maltose(in) + ADP + phosphate + H(+). In terms of biological role, part of the ABC transporter complex MalEFGK involved in maltose/maltodextrin import. Responsible for energy coupling to the transport system. The chain is Maltose/maltodextrin import ATP-binding protein MalK from Photorhabdus luminescens (Xenorhabdus luminescens).